Here is a 243-residue protein sequence, read N- to C-terminus: MSGHSKWHNIQGRKNAQDSKRGKIFQKLSRELYMAAKQGGPDPSGNPSLRLVMDKAKAANMPKDNIKRALDKASDRDAANYDEVTYEGYGPGGVAILVEALTDNRNRTSSTVRVAITRHGGNMAAAGAVSYMFDRKGYLVISRDDLDVDEDQMLEDALEAGAEDMQTSDEAFEIYTDPKEFAQVRDALEEKGYKFVQNELTMVPQNLTPIPEDKVEKFQAMIDQLEDDDDVQEVYTAGDWPDD.

The segment at 1-23 is disordered; that stretch reads MSGHSKWHNIQGRKNAQDSKRGK.

It belongs to the TACO1 family.

It localises to the cytoplasm. This chain is Probable transcriptional regulatory protein LSEI_1022, found in Lacticaseibacillus paracasei (strain ATCC 334 / BCRC 17002 / CCUG 31169 / CIP 107868 / KCTC 3260 / NRRL B-441) (Lactobacillus paracasei).